A 725-amino-acid chain; its full sequence is N-alpha-acetyltransferase 35, NatC auxiliary subunit (725 aa).

The segment at 548 to 573 (ERIMEEQQKGRSSKKTKKKKKVRPLS) is disordered. The span at 558–571 (RSSKKTKKKKKVRP) shows a compositional bias: basic residues.

This sequence belongs to the MAK10 family. Component of the N-terminal acetyltransferase C (NatC) complex, which is composed of NAA35, NAA38 and NAA30. Expressed in primary spermatocytes, basal epidermis, interstitial fibroblasts of skeletal muscle, and intestinal crypts.

It localises to the cytoplasm. Auxillary component of the N-terminal acetyltransferase C (NatC) complex which catalyzes acetylation of N-terminal methionine residues. N-terminal acetylation protects proteins from ubiquitination and degradation by the N-end rule pathway. Involved in regulation of apoptosis and proliferation of smooth muscle cells. This Rattus norvegicus (Rat) protein is N-alpha-acetyltransferase 35, NatC auxiliary subunit (Naa35).